Reading from the N-terminus, the 495-residue chain is MKAIMVVGTTSHAGKSFLTTALCRILARRGWHVTPFKGQNMALNSYVTPTGGEMGFAQAVQAWAAGTAPRVEMNPILLKPQGNMTSQVILMGKVAGQTTASDYYEQYFKPGWEAIASALKRLAFEYDLVICEGAGSPAEINLKHRDLTNMRVAQHLGATTLLVVDIDRGGAFAHVVGTLALLDPEERALIKGIIINKFRGQRSLLDSGIKWLEDYTGIPVLGVIPWSEILFPAEDSLDLFERKTKPNGEININVIRLPRISNFTDFDALESEPTVSLNYLDLSQELGYPDAVIIPGSKTTIQDLSALHTSGMAEKLEQYANAGGIVLGICGGFQMLGRRVLDPNQIEGKQEEFAGLNLLPIETTILPDKITTQRQVFSNHPQSGLPVTGYEIHQGITRLADGVKNLENVGCQALFNDEKLGIVTHSQLVWGCYLHGLFDNGAWRRAWLNFLRHRRGLSALPTGIPNYREQREATLNSVADLVEANVNLSPILSQL.

Residues 249-443 enclose the GATase cobBQ-type domain; it reads EININVIRLP…LHGLFDNGAW (195 aa). The active-site Nucleophile is Cys330. His435 is a catalytic residue.

This sequence belongs to the CobB/CobQ family. CobQ subfamily.

It functions in the pathway cofactor biosynthesis; adenosylcobalamin biosynthesis. Functionally, catalyzes amidations at positions B, D, E, and G on adenosylcobyrinic A,C-diamide. NH(2) groups are provided by glutamine, and one molecule of ATP is hydrogenolyzed for each amidation. This is Cobyric acid synthase from Gloeothece citriformis (strain PCC 7424) (Cyanothece sp. (strain PCC 7424)).